The chain runs to 286 residues: Energy-coupling factor transporter ATP-binding protein EcfA2 (286 aa).

An ABC transporter domain is found at 3–246 (IRFDNVSYTY…KEKLADWHIA (244 aa)). 40 to 47 (GQTGSGKS) is an ATP binding site.

This sequence belongs to the ABC transporter superfamily. Energy-coupling factor EcfA family. As to quaternary structure, forms a stable energy-coupling factor (ECF) transporter complex composed of 2 membrane-embedded substrate-binding proteins (S component), 2 ATP-binding proteins (A component) and 2 transmembrane proteins (T component).

It is found in the cell membrane. In terms of biological role, ATP-binding (A) component of a common energy-coupling factor (ECF) ABC-transporter complex. Unlike classic ABC transporters this ECF transporter provides the energy necessary to transport a number of different substrates. The protein is Energy-coupling factor transporter ATP-binding protein EcfA2 of Staphylococcus aureus (strain bovine RF122 / ET3-1).